Here is a 203-residue protein sequence, read N- to C-terminus: Eukaryotic translation initiation factor isoform 4E (203 aa).

The segment covering 1-25 (MATETAGAVVESSSAATVPSPAPEA) has biased composition (low complexity). The tract at residues 1–27 (MATETAGAVVESSSAATVPSPAPEAGS) is disordered. MRNA-binding positions include 47–52 (QGAAWG), Lys79, and 97–98 (WE). A disulfide bridge links Cys102 with Cys141. 148–153 (RQRQDK) serves as a coordination point for mRNA.

This sequence belongs to the eukaryotic initiation factor 4E family. In terms of assembly, EIF4F is a multi-subunit complex, the composition of which varies with external and internal environmental conditions. It is composed of at least EIF4A, EIF4E and EIF4G. EIF4E is also known to interact with other partners. In higher plants two isoforms of EIF4F have been identified, named isoform EIF4F and isoform EIF(iso)4F. Isoform EIF4F has subunits p220 and p26, whereas isoform EIF(iso)4F has subunits p82 and p28. As to quaternary structure, (Microbial infection) Interacts with the potyvirus peanut stripe virus (PStV) helper component proteinase (HC-Pro) in the cytoplasm and with PStV viral genome-linked protein (VPg) in the nucleus; these interactions are possible in susceptible hosts but impaired in resistant plants. In terms of processing, according to the redox status, the Cys-102-Cys-141 disulfide bridge may have a role in regulating protein function by affecting its ability to bind capped mRNA. As to expression, expressed ubiquitously with highest levels in young leaves and roots, and lowest levels in flowers.

It is found in the cytoplasm. Its subcellular location is the nucleus. Component of the protein complex eIF4F, which is involved in the recognition of the mRNA cap, ATP-dependent unwinding of 5'-terminal secondary structure and recruitment of mRNA to the ribosome. Recognizes and binds the 7-methylguanosine-containing mRNA cap during an early step in the initiation of protein synthesis and facilitates ribosome binding by inducing the unwinding of the mRNAs secondary structures. Key component of recessive resistance to potyviruses such as peanut stripe virus (PStV). Its function is as follows. (Microbial infection) Susceptibility host factor required for viral infection by recruiting viral RNAs to the host ribosomal complex via an interaction with viral genome-linked protein (VPg). This Arachis hypogaea (Peanut) protein is Eukaryotic translation initiation factor isoform 4E.